A 1382-amino-acid polypeptide reads, in one-letter code: Hepatocyte growth factor receptor (1382 aa).

Positions 1–24 (MKASAVLAPGILVILFTLVQKSNC) are cleaved as a signal peptide. Residues 25–933 (ECKEALVKSK…VIVQPDQNIT (909 aa)) lie on the Extracellular side of the membrane. The Sema domain maps to 27 to 516 (KEALVKSKMN…TGKKITKIPL (490 aa)). An N-linked (GlcNAc...) asparagine glycan is attached at N45. Disulfide bonds link C95–C101, C98–C160, C133–C141, and C173–C176. The N-linked (GlcNAc...) asparagine glycan is linked to N106. N-linked (GlcNAc...) asparagine glycans are attached at residues N203 and N359. 2 cysteine pairs are disulfide-bonded: C299-C364 and C386-C398. N-linked (GlcNAc...) asparagine glycosylation is found at N400 and N406. Intrachain disulfides connect C521/C539, C527/C562, C530/C546, and C542/C552. 3 IPT/TIG domains span residues 564-656 (PTIY…FSYV), 658-740 (PIIT…FSYQ), and 743-837 (PIIY…LIYV). T583 carries O-linked (Man) threonine glycosylation. Residues N608 and N636 are each glycosylated (N-linked (GlcNAc...) asparagine). O-linked (Man) threonine glycosylation is found at T677 and T762. N786, N880, and N931 each carry an N-linked (GlcNAc...) asparagine glycan. A helical membrane pass occupies residues 934 to 956 (EFIVGILSISGILLTLLGLLLWW). Residues 957–1382 (KKKKQIKDLG…QDNFDSEGNT (426 aa)) lie on the Cytoplasmic side of the membrane. Phosphoserine is present on S967. A Phosphothreonine modification is found at T978. A phosphoserine mark is found at S991, S998, and S1001. At Y1004 the chain carries Phosphotyrosine. A Protein kinase domain is found at 1079 to 1346 (VHFNEVIGRG…RISAIFSTFI (268 aa)). ATP contacts are provided by residues 1085–1093 (IGRGHFGCV) and K1111. D1205 serves as the catalytic Proton acceptor. Positions 1213–1382 (LDENFTVKVA…QDNFDSEGNT (170 aa)) are interaction with RANBP9. At Y1231 the chain carries Phosphotyrosine. Phosphotyrosine; by autocatalysis is present on residues Y1235 and Y1236. The residue at position 1290 (T1290) is a Phosphothreonine. The tract at residues 1321-1360 (WHPKAELRPSFSELVSRISAIFSTFIGEHYVHVNATYVNI) is interaction with MUC20. Phosphotyrosine; by autocatalysis is present on residues Y1350 and Y1357. At Y1366 the chain carries Phosphotyrosine.

The protein belongs to the protein kinase superfamily. Tyr protein kinase family. As to quaternary structure, heterodimer made of an alpha chain (50 kDa) and a beta chain (145 kDa) which are disulfide linked. Binds PLXNB1. Interacts when phosphorylated with downstream effectors including STAT3, PIK3R1, SRC, PCLG1, GRB2 and GAB1. Interacts with SPSB1, SPSB2 and SPSB4. Interacts with INPP5D/SHIP1. When phosphorylated at Tyr-1357, interacts with INPPL1/SHIP2. Interacts with RANBP9 and RANBP10, as well as SPSB1, SPSB2, SPSB3 and SPSB4. SPSB1 binding occurs in the presence and in the absence of HGF, however HGF treatment has a positive effect on this interaction. Interacts with MUC20; prevents interaction with GRB2 and suppresses hepatocyte growth factor-induced cell proliferation. Interacts with GRB10. Interacts with PTPN1 and PTPN2. Interacts with tensin TNS3. Interacts (when phosphorylated) with tensin TNS4 (via SH2 domain); the interaction increases MET protein stability by inhibiting MET endocytosis and subsequent lysosomal degradation. Autophosphorylated in response to ligand binding on Tyr-1235 and Tyr-1236 in the kinase domain leading to further phosphorylation of Tyr-1350 and Tyr-1357 in the C-terminal multifunctional docking site. Dephosphorylated by PTPRJ at Tyr-1350 and Tyr-1366. Dephosphorylated by PTPN1 and PTPN2. In terms of processing, ubiquitinated. Ubiquitination by CBL regulates the receptor stability and activity through proteasomal degradation. Post-translationally, O-mannosylation of IPT/TIG domains by TMEM260 is required for protein maturation. O-mannosylated residues are composed of single mannose glycans that are not elongated or modified.

Its subcellular location is the membrane. The catalysed reaction is L-tyrosyl-[protein] + ATP = O-phospho-L-tyrosyl-[protein] + ADP + H(+). With respect to regulation, in its inactive state, the C-terminal tail interacts with the catalytic domain and inhibits the kinase activity. Upon ligand binding, the C-terminal tail is displaced and becomes phosphorylated, thus increasing the kinase activity. In terms of biological role, receptor tyrosine kinase that transduces signals from the extracellular matrix into the cytoplasm by binding to hepatocyte growth factor/HGF ligand. Regulates many physiological processes including proliferation, scattering, morphogenesis and survival. Ligand binding at the cell surface induces autophosphorylation of MET on its intracellular domain that provides docking sites for downstream signaling molecules. Following activation by ligand, interacts with the PI3-kinase subunit PIK3R1, PLCG1, SRC, GRB2, STAT3 or the adapter GAB1. Recruitment of these downstream effectors by MET leads to the activation of several signaling cascades including the RAS-ERK, PI3 kinase-AKT, or PLCgamma-PKC. The RAS-ERK activation is associated with the morphogenetic effects while PI3K/AKT coordinates prosurvival effects. During embryonic development, MET signaling plays a role in gastrulation, development and migration of muscles and neuronal precursors, angiogenesis and kidney formation. In adults, participates in wound healing as well as organ regeneration and tissue remodeling. Also promotes differentiation and proliferation of hematopoietic cells. In Atelerix albiventris (Middle-African hedgehog), this protein is Hepatocyte growth factor receptor (MET).